The chain runs to 256 residues: Capsid protein (256 aa).

Residues 3-20 carry the Bipartite nuclear localization signal motif; the sequence is KRPADIVISTPASKVRRK. A Nuclear localization signal motif is present at residues 40 to 54; that stretch reads RRRTWVNRPMYRKPM. A zinc finger spans residues 68 to 85; that stretch reads CEGPCKVQSYEQRHDVAH. Residues 101 to 122 carry the Nuclear export signal motif; that stretch reads ITHRTGKRFCIKSIYVLGKIWM. The Bipartite nuclear localization signal signature appears at 200 to 247; the sequence is NRFYKIYNHCTYNHQEAAKYENHTENALLLYMACTHASNPVYATLKIR.

Belongs to the geminiviridae capsid protein family. In terms of assembly, homomultimer. Binds to single-stranded and double-stranded viral DNA. Interacts (via nuclear localization signals) with host importin alpha-1a.

Its subcellular location is the virion. It is found in the host nucleus. Its function is as follows. Encapsidates the viral genome into characteristic twinned ('geminate') particles. Binds the genomic viral ssDNA and shuttles it into and out of the cell nucleus. Plays a role in protection of the genome from degradation, virus acquisition and transmission by insect vectors, infectivity, and systemic movement. The CP of monopartite geminiviruses is absolutely essential for virus movement. The sequence is that of Capsid protein from Tomato leaf curl virus (strain Australia) (ToLCV).